The primary structure comprises 515 residues: 2,3-bisphosphoglycerate-independent phosphoglycerate mutase (515 aa).

Positions 14 and 64 each coordinate Mn(2+). S64 functions as the Phosphoserine intermediate in the catalytic mechanism. Residues H125, 155-156, R187, R193, 263-266, and K337 contribute to the substrate site; these read RD and RADR. Residues D404, H408, D445, H446, and H464 each contribute to the Mn(2+) site.

This sequence belongs to the BPG-independent phosphoglycerate mutase family. As to quaternary structure, monomer. Mn(2+) is required as a cofactor.

The enzyme catalyses (2R)-2-phosphoglycerate = (2R)-3-phosphoglycerate. It functions in the pathway carbohydrate degradation; glycolysis; pyruvate from D-glyceraldehyde 3-phosphate: step 3/5. Functionally, catalyzes the interconversion of 2-phosphoglycerate and 3-phosphoglycerate. The sequence is that of 2,3-bisphosphoglycerate-independent phosphoglycerate mutase from Pseudomonas aeruginosa (strain UCBPP-PA14).